The chain runs to 440 residues: Tryptophan synthase beta chain 2 (440 aa).

Residue Lys-110 is modified to N6-(pyridoxal phosphate)lysine.

This sequence belongs to the TrpB family. In terms of assembly, tetramer of two alpha and two beta chains. Pyridoxal 5'-phosphate serves as cofactor.

It carries out the reaction (1S,2R)-1-C-(indol-3-yl)glycerol 3-phosphate + L-serine = D-glyceraldehyde 3-phosphate + L-tryptophan + H2O. It participates in amino-acid biosynthesis; L-tryptophan biosynthesis; L-tryptophan from chorismate: step 5/5. In terms of biological role, the beta subunit is responsible for the synthesis of L-tryptophan from indole and L-serine. This is Tryptophan synthase beta chain 2 (trpB2) from Pyrococcus abyssi (strain GE5 / Orsay).